An 824-amino-acid polypeptide reads, in one-letter code: Disintegrin and metalloproteinase domain-containing protein 8 (824 aa).

The signal sequence occupies residues 1–16 (MRGLGLWLLGAMMLPA). Residues 17–655 (IAPSRPWALM…EVHAASGSLP (639 aa)) lie on the Extracellular side of the membrane. N-linked (GlcNAc...) asparagine glycosylation is found at Asn67 and Asn91. The 201-residue stretch at 200–400 (RYVELYVVVD…PQSVCLANAP (201 aa)) folds into the Peptidase M12B domain. Intrachain disulfides connect Cys310-Cys395, Cys351-Cys379, Cys353-Cys362, Cys435-Cys457, Cys448-Cys454, Cys466-Cys486, Cys473-Cys503, Cys498-Cys508, Cys566-Cys613, Cys613-Cys623, Cys617-Cys629, and Cys631-Cys640. Position 334 (His334) interacts with Zn(2+). The active site involves Glu335. Zn(2+) contacts are provided by His338 and His344. The 87-residue stretch at 408–494 (GPVCGNLFVE…ECPEDAFQEN (87 aa)) folds into the Disintegrin domain. A glycan (N-linked (GlcNAc...) asparagine) is linked at Asn436. Residues 609-641 (RSSNCSAQCHNHGVCNHKQECHCHAGWAPPHCA) enclose the EGF-like domain. A glycan (N-linked (GlcNAc...) asparagine) is linked at Asn612. Residues 656 to 676 (VFVVVVLVLLAVVLVTLAGII) traverse the membrane as a helical segment. Topologically, residues 677 to 824 (VYRKARSRIL…KQGAGAPTAP (148 aa)) are cytoplasmic. Disordered regions lie at residues 710 to 756 (VPAK…PVTV) and 776 to 824 (KPTF…PTAP). Over residues 747–756 (RPPPAPPVTV) the composition is skewed to pro residues. Residues 788-804 (PGAGAANPGPAEGAVGP) show a composition bias toward low complexity.

In terms of assembly, interacts with FST3. Requires Zn(2+) as cofactor. As to expression, expressed on neutrophils and monocytes.

It localises to the membrane. Functionally, possible involvement in extravasation of leukocytes. The chain is Disintegrin and metalloproteinase domain-containing protein 8 (ADAM8) from Homo sapiens (Human).